The following is a 367-amino-acid chain: Popeye domain-containing protein 2 (367 aa).

N-linked (GlcNAc...) asparagine glycosylation is present at Asn-4. Transmembrane regions (helical) follow at residues 36–56 (FLLMGFMAGSGVYGCFYLFGI) and 77–97 (IVLWNVLLTVACLLQLAQLVY). Disordered regions lie at residues 273-292 (PSASDGEPESEKDDEEALEA) and 312-367 (APPA…TPEL). The span at 278-290 (GEPESEKDDEEAL) shows a compositional bias: acidic residues. Polar residues predominate over residues 344–356 (PLQNSSQVMSRSQ). An N-linked (GlcNAc...) asparagine glycan is attached at Asn-347. Thr-364 bears the Phosphothreonine mark.

Belongs to the popeye family. As to expression, expressed in the developing and adult heart, with high expression levels in the sinus and atrioventricular nodes. Also expressed in the bladder and skeletal muscle.

The protein localises to the membrane. The protein resides in the cell membrane. It is found in the sarcolemma. Important for the maintenance of cardiac function. Plays a regulatory function in heart rate dynamics mediated, at least in part, through cAMP-binding and, probably, by increasing cell surface expression of the potassium channel KCNK2 and enhancing current density. This is Popeye domain-containing protein 2 (Popdc2) from Mus musculus (Mouse).